A 236-amino-acid chain; its full sequence is Penton protein H240R (236 aa).

The protein belongs to the asfivirus H240R family.

The protein localises to the virion. In terms of biological role, forms the penton at the fivefold vertices of the icosahedral capsid. Together with the minor capsid proteins (p17, p49, and M1249L), forms a complicated network immediately below the outer capsid shell, stabilizing the whole capsid. This chain is Penton protein H240R, found in African swine fever virus (isolate Warthog/Namibia/Wart80/1980) (ASFV).